The primary structure comprises 173 residues: ATP synthase subunit b 1 (173 aa).

Residues 15 to 37 form a helical membrane-spanning segment; it reads TFWVTVAVLIFLAFFGRKIVGAI.

It belongs to the ATPase B chain family. In terms of assembly, F-type ATPases have 2 components, F(1) - the catalytic core - and F(0) - the membrane proton channel. F(1) has five subunits: alpha(3), beta(3), gamma(1), delta(1), epsilon(1). F(0) has three main subunits: a(1), b(2) and c(10-14). The alpha and beta chains form an alternating ring which encloses part of the gamma chain. F(1) is attached to F(0) by a central stalk formed by the gamma and epsilon chains, while a peripheral stalk is formed by the delta and b chains.

It localises to the cell inner membrane. Functionally, f(1)F(0) ATP synthase produces ATP from ADP in the presence of a proton or sodium gradient. F-type ATPases consist of two structural domains, F(1) containing the extramembraneous catalytic core and F(0) containing the membrane proton channel, linked together by a central stalk and a peripheral stalk. During catalysis, ATP synthesis in the catalytic domain of F(1) is coupled via a rotary mechanism of the central stalk subunits to proton translocation. Component of the F(0) channel, it forms part of the peripheral stalk, linking F(1) to F(0). This Acidiphilium cryptum (strain JF-5) protein is ATP synthase subunit b 1.